The chain runs to 518 residues: Macrophage receptor MARCO (518 aa).

The Cytoplasmic portion of the chain corresponds to Met1 to Phe48. A helical; Signal-anchor for type II membrane protein transmembrane segment spans residues Cys49–Ile69. Topologically, residues Gln70–Ser518 are extracellular. Residues Asn87 and Asn138 are each glycosylated (N-linked (GlcNAc...) asparagine). The disordered stretch occupies residues Gln147 to Met426. Residues Lys149 to Glu418 form the Collagen-like domain. Low complexity predominate over residues Ser154–Ala163. Over residues Lys239 to Asp250 the composition is skewed to basic and acidic residues. 2 stretches are compositionally biased toward low complexity: residues Pro293–Pro314 and Arg325–Ala344. The segment covering Lys410–Gln421 has biased composition (basic and acidic residues). The SRCR domain maps to Val423–Ser518. Intrachain disulfides connect Cys446/Cys507, Cys459/Cys517, and Cys487/Cys497.

In terms of assembly, homotrimer; disulfide-linked. Trimers may assemble in larger oligomers thus resulting in the creation of a large surface capable of interacting with very large ligands. Post-translationally, N-glycosylated. Expressed in subpopulations of macrophages in the spleen and the medullary cord of lymph nodes (at protein level).

The protein localises to the cell membrane. Functionally, pattern recognition receptor (PRR) which binds Gram-positive and Gram-negative bacteria. Also plays a role in binding of unopsonized particles by alveolar macrophages. Binds to the secretoglobin SCGB3A2. The polypeptide is Macrophage receptor MARCO (Marco) (Mus musculus (Mouse)).